The primary structure comprises 518 residues: Glutamate--cysteine ligase (518 aa).

The protein belongs to the glutamate--cysteine ligase type 1 family. Type 1 subfamily.

The catalysed reaction is L-cysteine + L-glutamate + ATP = gamma-L-glutamyl-L-cysteine + ADP + phosphate + H(+). The protein operates within sulfur metabolism; glutathione biosynthesis; glutathione from L-cysteine and L-glutamate: step 1/2. This chain is Glutamate--cysteine ligase, found in Shigella flexneri serotype 5b (strain 8401).